Consider the following 267-residue polypeptide: MLTITAINAFNDNYIWVLQQDTQQAVYVVDPGDVNVVLDYLNAHQLTLAGILITHHHRDHTGGIAALVAYVEQTTGHTLAVYGPQSEAIQGVNIAIEPQITQILHLPFLNSPVQVLSVPGHTAGHIAYLVDGALFCGDTLFSGGCGRLFEGTPAQMCHSLRLLAALPAETRVYCAHEYTLANLKFAQAADPSNAKLKAYNEQATALRAQGKATIPSTIGLERSINPFLRGLTPTIVDSIKQQFCDQDLSNVDELTYFTLLRQWKDIF.

Positions 55, 57, 59, 60, 121, 138, and 176 each coordinate Zn(2+).

This sequence belongs to the metallo-beta-lactamase superfamily. Glyoxalase II family. Monomer. It depends on Zn(2+) as a cofactor.

It catalyses the reaction an S-(2-hydroxyacyl)glutathione + H2O = a 2-hydroxy carboxylate + glutathione + H(+). The protein operates within secondary metabolite metabolism; methylglyoxal degradation; (R)-lactate from methylglyoxal: step 2/2. Its function is as follows. Thiolesterase that catalyzes the hydrolysis of S-D-lactoyl-glutathione to form glutathione and D-lactic acid. The chain is Hydroxyacylglutathione hydrolase from Shewanella oneidensis (strain ATCC 700550 / JCM 31522 / CIP 106686 / LMG 19005 / NCIMB 14063 / MR-1).